Reading from the N-terminus, the 178-residue chain is MKSIEVDEELYRYIASQTQHIGESASDILRRLLMVPAEQQLEVVVPVRPKGIIVSKDAGNEHKLDRVKEMRTLLISDEFAVQGKAIGRFMMILSSLYRIDSDGFIEAAAIKGRTRVYFADNEEALLASGKTTKPKAIPETPYWVITNTNTDRKRQMVDQLMVKMNYNTDIIEKVCGVI.

The interaction with DNA stretch occupies residues 113-117 (RTRVY).

Belongs to the SeqA family. Homodimer. Polymerizes to form helical filaments.

It localises to the cytoplasm. In terms of biological role, negative regulator of replication initiation, which contributes to regulation of DNA replication and ensures that replication initiation occurs exactly once per chromosome per cell cycle. Binds to pairs of hemimethylated GATC sequences in the oriC region, thus preventing assembly of replication proteins and re-initiation at newly replicated origins. Repression is relieved when the region becomes fully methylated. This Photobacterium profundum (strain SS9) protein is Negative modulator of initiation of replication.